The sequence spans 498 residues: MGSIDSNYDTESAGQCRPLEPEEFRKQAHQMVDFIADYYKNIESYPVLSQVEPGYLQSRLPETAPYRPEPFESILKDVHKDIIPGVTHWLSPNFFAYFPATVSSAAFVGEMLCTCFNAVGFNWLASPAELELEMVVMDWLASMLKLPNSFTFLGTGGGVIQGTTSEAILCTLIAARDRALESIGVDSIHKLVVYGSDQTHSTYAKACNLAGILPCNIRSIRTEAVANFSLSPDSLHREIEADVAAGMVPLYLCATVGTTSTTAIDSLSPLADVANDYGLWFHVDAAYAGSACICPEFRHYLDGIERADSLSLSPHKWLLSYLDCCCLWVKRPSVLVKALSTDPEYLKNKPSESNSVVDFKDWQVGTGRRFKALRLWFVMRSYGVANLQSHIRSDIQMAKMFEEFVNSDPRFEIVVPRVFSLVCFRLNPFSKSDPCNTELLNRKLLEWVNSTGQVYITHTKVGGVYMLRFAVGATLTEEHHVSAAWKLIREGADALLCS.

At Lys316 the chain carries N6-(pyridoxal phosphate)lysine.

This sequence belongs to the group II decarboxylase family. It depends on pyridoxal 5'-phosphate as a cofactor.

It carries out the reaction L-tryptophan + H(+) = tryptamine + CO2. Involved in the biosynthesis of tryptamine. Supplies tryptamine for the indole moiety of camptothecin (CPT), an anti-cancer monoterpene alkaloid. Represents a key step in monoterpene indole alkaloid biosynthesis. Is specific for tryptophan, and inactive against tyrosine, phenylalanine and 3,4-dihydroxyphenylalanine (dopa). The polypeptide is Tryptophan decarboxylase TDC2 (Camptotheca acuminata (Happy tree)).